Reading from the N-terminus, the 615-residue chain is Sodium-coupled neutral amino acid transporter 9 homolog (615 aa).

Over 1–165 the chain is Cytoplasmic; it reads MPPFFAEFTE…LKDVSGKQGS (165 aa). The interval 41 to 65 is disordered; the sequence is VDDNDTDPLLDDEPPRRLPPAGGVP. The span at 42–52 shows a compositional bias: acidic residues; sequence DDNDTDPLLDD. Residues 166–186 form a helical membrane-spanning segment; that stretch reads IVTIFSIWNTMMGTSLLAMPW. The tract at residues 175–180 is important for arginine binding and amino acid transport; it reads TMMGTS. Residues 187–192 are Lumenal-facing; the sequence is ALQQAG. A helical membrane pass occupies residues 193-213; it reads LVLGIIIMLSMAAICFYTAYI. Topologically, residues 214–246 are cytoplasmic; the sequence is VIESPKRLQDLSVDPLLAEFSDVCKSLFGRIGE. Residues 247–273 traverse the membrane as a helical segment; that stretch reads YCAVVFSVCVLIGGVIVYWVLMSNFLY. Residues 274–341 lie on the Lumenal side of the membrane; it reads YTGAVVYESM…TGDDSWSFDK (68 aa). 2 N-linked (GlcNAc...) asparagine glycosylation sites follow: asparagine 286 and asparagine 295. An intrachain disulfide couples cysteine 304 to cysteine 478. Residues 342 to 358 traverse the membrane as a helical segment; that stretch reads FWTLRGTVPIYLAFALF. Residues 359-367 lie on the Cytoplasmic side of the membrane; it reads PLMNFKSPT. Residues 368-392 traverse the membrane as a helical segment; sequence FFTKFNVLGTISVMYLLMFVFSKLL. Residues 393-413 lie on the Lumenal side of the membrane; it reads ECGVNMDFSNPKSIHYVQLAN. The helical transmembrane segment at 414 to 434 threads the bilayer; it reads MHFPALSGTLTLSYFIHNAVL. The Cytoplasmic portion of the chain corresponds to 435 to 451; that stretch reads TILRNQKHPENNARDLS. A helical transmembrane segment spans residues 452–472; that stretch reads IGYCLVAFCYVFIGFTFFAAF. Residues 473–491 lie on the Lumenal side of the membrane; sequence PVQRSCISDNFLNNFGAGD. The helical transmembrane segment at 492–512 threads the bilayer; sequence VLSSTARLFLLFQMITVLPLL. At 513–533 the chain is on the cytoplasmic side; the sequence is MFLVRSQLFYAIFGQTWPGAI. The helical transmembrane segment at 534-554 threads the bilayer; sequence RVIILNVLLIAVAVGFATFYP. The Lumenal portion of the chain corresponds to 555–561; it reads NVGSILR. Residues 562 to 582 traverse the membrane as a helical segment; the sequence is YVGSISGLVYVFALPAMVYIK. The Cytoplasmic segment spans residues 583 to 594; that stretch reads QSEAAGTLTPMK. A helical transmembrane segment spans residues 595–615; that stretch reads KYAHYGIIVIGVANLIAQFVI.

Belongs to the amino acid/polyamine transporter 2 family. SLC38A9 subfamily.

It is found in the lysosome membrane. Its subcellular location is the late endosome membrane. Amino acid transport is sodium-dependent. Transport of leucine, tyrosine and phenylalanine is increased by arginine binding. Functionally, lysosomal amino acid transporter involved in the activation of mTORC1 in response to amino acid levels. Probably acts as an amino acid sensor of the Rag GTPases and Ragulator complexes, 2 complexes involved in amino acid sensing and activation of mTORC1, a signaling complex promoting cell growth in response to growth factors, energy levels, and amino acids. In Caenorhabditis elegans, this protein is Sodium-coupled neutral amino acid transporter 9 homolog.